Reading from the N-terminus, the 207-residue chain is Cytochrome c biogenesis ATP-binding export protein CcmA (207 aa).

One can recognise an ABC transporter domain in the interval 2–204; the sequence is LECENLSCTR…TTIDIRNFNR (203 aa). 34 to 41 serves as a coordination point for ATP; that stretch reads GPNGSGKT.

It belongs to the ABC transporter superfamily. CcmA exporter (TC 3.A.1.107) family. In terms of assembly, the complex is composed of two ATP-binding proteins (CcmA) and two transmembrane proteins (CcmB).

The protein localises to the cell membrane. The catalysed reaction is heme b(in) + ATP + H2O = heme b(out) + ADP + phosphate + H(+). Its function is as follows. Part of the ABC transporter complex CcmAB involved in the biogenesis of c-type cytochromes; once thought to export heme, this seems not to be the case, but its exact role is uncertain. Responsible for energy coupling to the transport system. The chain is Cytochrome c biogenesis ATP-binding export protein CcmA from Wolbachia pipientis wMel.